We begin with the raw amino-acid sequence, 217 residues long: Probable transaldolase (217 aa).

Catalysis depends on Lys-83, which acts as the Schiff-base intermediate with substrate.

It belongs to the transaldolase family. Type 3B subfamily.

The protein localises to the cytoplasm. It catalyses the reaction D-sedoheptulose 7-phosphate + D-glyceraldehyde 3-phosphate = D-erythrose 4-phosphate + beta-D-fructose 6-phosphate. The protein operates within carbohydrate degradation; pentose phosphate pathway; D-glyceraldehyde 3-phosphate and beta-D-fructose 6-phosphate from D-ribose 5-phosphate and D-xylulose 5-phosphate (non-oxidative stage): step 2/3. Its function is as follows. Transaldolase is important for the balance of metabolites in the pentose-phosphate pathway. This Sinorhizobium medicae (strain WSM419) (Ensifer medicae) protein is Probable transaldolase.